Reading from the N-terminus, the 335-residue chain is E3 ubiquitin ligase rnf-121 (335 aa).

At 1–47 the chain is on the cytoplasmic side; it reads MGQHGAIRLQNEVQEGMPPPHELTEEEQWAEEHRKMHEKHKGHEAMH. Residues 48 to 68 form a helical membrane-spanning segment; it reads MEMMVIFMISVIVGQIFLVTW. Residues 69 to 72 are Lumenal-facing; sequence KRKH. The chain crosses the membrane as a helical span at residues 73–93; the sequence is FKSYQMCTLIGMLTIPVYVCF. Residues 94 to 99 lie on the Cytoplasmic side of the membrane; that stretch reads NRSWYR. Residues 100–120 traverse the membrane as a helical segment; that stretch reads FLATWLVFCIFSAFIWLKASA. The Lumenal segment spans residues 121–143; sequence QHISGGTPRFVYKWFLFLHKLSY. The helical transmembrane segment at 144-164 threads the bilayer; sequence VLGVVGYLIMMGALLGFHVLF. Residues 165-168 are Cytoplasmic-facing; it reads GVSQ. A helical membrane pass occupies residues 169 to 189; the sequence is PTLMDAGILFMFYGVYYGVLG. Over 190–335 the chain is Lumenal; it reads RDFAHICTAR…QGLTTWMGLE (146 aa). An RING-type; atypical zinc finger spans residues 222–284; the sequence is CAVCGGRLDD…GKLQTCPYCK (63 aa).

Belongs to the RNF121 family. Expressed in body wall muscles, the hypodermis, seam cells, vulval cells, spermathecal cells, uterine cells and the distal tip cell (at protein level).

It localises to the endoplasmic reticulum membrane. The protein resides in the golgi apparatus membrane. The catalysed reaction is S-ubiquitinyl-[E2 ubiquitin-conjugating enzyme]-L-cysteine + [acceptor protein]-L-lysine = [E2 ubiquitin-conjugating enzyme]-L-cysteine + N(6)-ubiquitinyl-[acceptor protein]-L-lysine.. It functions in the pathway protein modification; protein ubiquitination. Its function is as follows. E3 ubiquitin ligase which accepts ubiquitin and transfers it to substrates such as the beta-integrin subunit pat-3, promoting their degradation by the endoplasmic reticulum-associated degradation (ERAD) pathway which is a pathway involved in ubiquitin-dependent degradation of misfolded endoplasmic reticulum proteins. Negatively regulates the unfolded protein response to reduce endoplasmic reticulum stress. Required for the cessation of distal tip cell migration at the end of larval morphogenesis. Plays a role in germline and gonad development. This Caenorhabditis elegans protein is E3 ubiquitin ligase rnf-121.